The primary structure comprises 267 residues: Putative metal-binding protein TM_0123 (267 aa).

Residues 1-15 (MKKILLLLVLIVAVL) form the signal peptide. Positions 53, 107, and 172 each coordinate a divalent metal cation.

This sequence belongs to the bacterial solute-binding protein 9 family.

Its subcellular location is the periplasm. Functionally, part of an ATP-binding cassette (ABC) transport system involved in metal import. Binds a metal with high affinity and specificity and delivers it to the membrane permease for translocation into the cytoplasm. The protein is Putative metal-binding protein TM_0123 of Thermotoga maritima (strain ATCC 43589 / DSM 3109 / JCM 10099 / NBRC 100826 / MSB8).